A 66-amino-acid polypeptide reads, in one-letter code: UPF0150 protein AF_0072.1 (66 aa).

Belongs to the UPF0150 family.

The polypeptide is UPF0150 protein AF_0072.1 (Archaeoglobus fulgidus (strain ATCC 49558 / DSM 4304 / JCM 9628 / NBRC 100126 / VC-16)).